We begin with the raw amino-acid sequence, 143 residues long: Large ribosomal subunit protein uL11 (143 aa).

This sequence belongs to the universal ribosomal protein uL11 family. Part of the ribosomal stalk of the 50S ribosomal subunit. Interacts with L10 and the large rRNA to form the base of the stalk. L10 forms an elongated spine to which L12 dimers bind in a sequential fashion forming a multimeric L10(L12)X complex. One or more lysine residues are methylated.

Functionally, forms part of the ribosomal stalk which helps the ribosome interact with GTP-bound translation factors. In Bordetella parapertussis (strain 12822 / ATCC BAA-587 / NCTC 13253), this protein is Large ribosomal subunit protein uL11.